The primary structure comprises 231 residues: Class II histocompatibility antigen, B-L beta chain (231 aa).

Residues 1 to 89 (FFQWSATVEC…IVAPLTLQRR (89 aa)) form a beta-1 region. Residues 1–194 (FFQWSATVEC…PGDVSRSKLL (194 aa)) lie on the Extracellular side of the membrane. Disulfide bonds link Cys-10–Cys-74 and Cys-111–Cys-167. N-linked (GlcNAc...) asparagine glycosylation is present at Asn-14. Residues 90 to 182 (EPKVRIFALQ…SLQQPITQRW (93 aa)) are beta-2. An Ig-like C1-type domain is found at 91–179 (PKVRIFALQS…EHTSLQQPIT (89 aa)). The connecting peptide stretch occupies residues 183-194 (EPPGDVSRSKLL). Residues 195–219 (MGVGGFVLGLVYLALGIFFFLCSKK) form a helical membrane-spanning segment. Over 220–231 (GQPDPTSPGILN) the chain is Cytoplasmic.

This sequence belongs to the MHC class II family.

Its subcellular location is the membrane. The protein is Class II histocompatibility antigen, B-L beta chain of Gallus gallus (Chicken).